The primary structure comprises 358 residues: Heavy metal-associated isoprenylated plant protein 37 (358 aa).

The HMA domain maps to 12-75 (IQTFSLRVNI…KLVKAGKHAE (64 aa)). The a metal cation site is built by Cys23 and Cys26. Disordered regions lie at residues 100–194 (QKGQ…QNTQ) and 332–358 (QQQS…CNIM). Positions 128–141 (AEEDGDGSEEEDGD) are enriched in acidic residues. Residues 148–181 (ANQQQQQNVVNAKKNSGGAAMNNGNNGVNAASKK) show a composition bias toward low complexity. 2 stretches are compositionally biased toward polar residues: residues 184–194 (QKQSNHNQNTQ) and 339–358 (HATN…CNIM). Cysteine methyl ester is present on Cys355. A lipid anchor (S-farnesyl cysteine) is attached at Cys355. Residues 356 to 358 (NIM) constitute a propeptide, removed in mature form.

Belongs to the HIPP family.

Heavy-metal-binding protein. The sequence is that of Heavy metal-associated isoprenylated plant protein 37 from Arabidopsis thaliana (Mouse-ear cress).